Here is a 192-residue protein sequence, read N- to C-terminus: Adenylate kinase (192 aa).

Residue G10–T15 coordinates ATP. The NMP stretch occupies residues S30 to V59. Residues T31, R36, T57 to V59, G85 to R88, and Q92 each bind AMP. The interval K126–D142 is LID. R127 is an ATP binding site. The AMP site is built by R139 and R150. Residue I178 participates in ATP binding.

This sequence belongs to the adenylate kinase family. As to quaternary structure, monomer.

The protein localises to the cytoplasm. It carries out the reaction AMP + ATP = 2 ADP. Its pathway is purine metabolism; AMP biosynthesis via salvage pathway; AMP from ADP: step 1/1. Its function is as follows. Catalyzes the reversible transfer of the terminal phosphate group between ATP and AMP. Plays an important role in cellular energy homeostasis and in adenine nucleotide metabolism. The sequence is that of Adenylate kinase from Bartonella henselae (strain ATCC 49882 / DSM 28221 / CCUG 30454 / Houston 1) (Rochalimaea henselae).